The primary structure comprises 319 residues: UDP-N-acetylenolpyruvoylglucosamine reductase (319 aa).

Residues 35 to 198 form the FAD-binding PCMH-type domain; the sequence is VGGPAEAMFK…TGCVLAGRPD (164 aa). Residue arginine 178 is part of the active site. Catalysis depends on serine 227, which acts as the Proton donor. Glutamate 302 is a catalytic residue.

Belongs to the MurB family. Requires FAD as cofactor.

It is found in the cytoplasm. The catalysed reaction is UDP-N-acetyl-alpha-D-muramate + NADP(+) = UDP-N-acetyl-3-O-(1-carboxyvinyl)-alpha-D-glucosamine + NADPH + H(+). It functions in the pathway cell wall biogenesis; peptidoglycan biosynthesis. In terms of biological role, cell wall formation. This Rhodospirillum rubrum (strain ATCC 11170 / ATH 1.1.1 / DSM 467 / LMG 4362 / NCIMB 8255 / S1) protein is UDP-N-acetylenolpyruvoylglucosamine reductase.